The following is a 315-amino-acid chain: MGRTFIHASKIKHAARKRKHHSNFRTLIKLLNNDAYKIESSKPLKNGKLFKYWKNRRRLFSKIDSASIYMTDELWFSVTPERIACFLANFVKACMPNAERILDVFCGGGGNTIQFAMQFPYVYGVDYSIEHIYCTAKNAQSYGVDDRIWLKRGSWKKLVSKQKLSKIKYDCVFGSPPWGGPEYLRNDVYDLEQHLKPMGITKMLKSFLKLSPNVIMFLPRNSDLNQLSRATRKVLGPFAKCKVLYVKENGYMKGIFCMWGECFFNYEPASTENSRRESSEKEELSSENEELSKRKKHESTTTTKDNTVDIYDVNG.

Residues 1 to 58 are required for correct nucleolar localization; that stretch reads MGRTFIHASKIKHAARKRKHHSNFRTLIKLLNNDAYKIESSKPLKNGKLFKYWKNRRR. Asp-126 lines the S-adenosyl-L-methionine pocket. A disordered region spans residues 271 to 315; that stretch reads TENSRRESSEKEELSSENEELSKRKKHESTTTTKDNTVDIYDVNG. The segment covering 273-284 has biased composition (basic and acidic residues); that stretch reads NSRRESSEKEEL.

It belongs to the methyltransferase superfamily. Trimethylguanosine synthase family. In terms of assembly, monomer. Interacts with the spliceosomal snRNP core component SMB1 and the snoRNP components CBF5 and NOP58.

It localises to the nucleus. Its subcellular location is the nucleolus. It catalyses the reaction a 5'-end (N(7)-methyl 5'-triphosphoguanosine)-ribonucleoside in snRNA + S-adenosyl-L-methionine = a 5'-end (N(2),N(7)-dimethyl 5'-triphosphoguanosine)-ribonucleoside in snRNA + S-adenosyl-L-homocysteine + H(+). The enzyme catalyses a 5'-end (N(7)-methyl 5'-triphosphoguanosine)-ribonucleoside in snoRNA + S-adenosyl-L-methionine = a 5'-end (N(2),N(7)-dimethyl 5'-triphosphoguanosine)-ribonucleoside in snoRNA + S-adenosyl-L-homocysteine + H(+). It carries out the reaction a 5'-end (N(2),N(7)-dimethyl 5'-triphosphoguanosine)-ribonucleoside in snRNA + S-adenosyl-L-methionine = a 5'-end (N(2),N(2),N(7)-trimethyl 5'-triphosphoguanosine)-ribonucleoside in snRNA + S-adenosyl-L-homocysteine + H(+). The catalysed reaction is a 5'-end (N(2),N(7)-dimethyl 5'-triphosphoguanosine)-ribonucleoside in snoRNA + S-adenosyl-L-methionine = a 5'-end (N(2),N(2),N(7)-trimethyl 5'-triphosphoguanosine)-ribonucleoside in snoRNA + S-adenosyl-L-homocysteine + H(+). Substrate inhibited by S-adenosyl-L-homocysteine. Functionally, catalyzes the two serial methylation steps for the conversion of the 7-monomethylguanosine (m(7)G) caps of snRNAs and snoRNAs to a 2,2,7-trimethylguanosine (m(2,2,7)G) cap structure. The enzyme is specific for guanine, and N7 methylation must precede N2 methylation. Hypermethylates the m3G cap on TLC1 telomerase which affects telomere silencing and telomere length regulation. Required for pre-mRNA splicing, pre-rRNA processing and small ribosomal subunit synthesis. Involved in nucleolar structural organization. This chain is Trimethylguanosine synthase (TGS1), found in Saccharomyces cerevisiae (strain ATCC 204508 / S288c) (Baker's yeast).